Consider the following 348-residue polypeptide: UDP-3-O-acylglucosamine N-acyltransferase (348 aa).

Residue His-237 is the Proton acceptor of the active site.

This sequence belongs to the transferase hexapeptide repeat family. LpxD subfamily. Homotrimer.

It catalyses the reaction a UDP-3-O-[(3R)-3-hydroxyacyl]-alpha-D-glucosamine + a (3R)-hydroxyacyl-[ACP] = a UDP-2-N,3-O-bis[(3R)-3-hydroxyacyl]-alpha-D-glucosamine + holo-[ACP] + H(+). Its pathway is bacterial outer membrane biogenesis; LPS lipid A biosynthesis. Its function is as follows. Catalyzes the N-acylation of UDP-3-O-acylglucosamine using 3-hydroxyacyl-ACP as the acyl donor. Is involved in the biosynthesis of lipid A, a phosphorylated glycolipid that anchors the lipopolysaccharide to the outer membrane of the cell. The chain is UDP-3-O-acylglucosamine N-acyltransferase from Geotalea daltonii (strain DSM 22248 / JCM 15807 / FRC-32) (Geobacter daltonii).